Consider the following 1075-residue polypeptide: DNA-directed RNA polymerase subunit beta (1075 aa).

It belongs to the RNA polymerase beta chain family. As to quaternary structure, in plastids the minimal PEP RNA polymerase catalytic core is composed of four subunits: alpha, beta, beta', and beta''. When a (nuclear-encoded) sigma factor is associated with the core the holoenzyme is formed, which can initiate transcription.

It is found in the plastid. The protein resides in the chloroplast. It catalyses the reaction RNA(n) + a ribonucleoside 5'-triphosphate = RNA(n+1) + diphosphate. In terms of biological role, DNA-dependent RNA polymerase catalyzes the transcription of DNA into RNA using the four ribonucleoside triphosphates as substrates. The protein is DNA-directed RNA polymerase subunit beta of Zea mays (Maize).